Reading from the N-terminus, the 458-residue chain is Zinc finger protein 239 (458 aa).

Lys-108 is covalently cross-linked (Glycyl lysine isopeptide (Lys-Gly) (interchain with G-Cter in SUMO2)). A Phosphoserine modification is found at Ser-191. 9 consecutive C2H2-type zinc fingers follow at residues 207–229 (YECSQCGKNFSQSSELLLHQRDH), 235–257 (YKCEQCGKGFTRSSSLLIHQAVH), 263–285 (YKCDKCGKGFTRSSSLLIHHAVH), 291–313 (YKCDKCGKGFSQSSKLHIHQRVH), 319–341 (YECEECGMSFSQRSNLHIHQRVH), 347–369 (YKCGECGKGFSQSSNLHIHRCIH), 375–397 (YQCYECGKGFSQSPDLRIHLRVH), 403–425 (YHCGKCGKGFSQSSKLLIHQRVH), and 431–453 (YECSKCGKGFSQSSNLHIHQRVH).

It belongs to the krueppel C2H2-type zinc-finger protein family.

It localises to the nucleus. Functionally, may be involved in transcriptional regulation. This is Zinc finger protein 239 (ZNF239) from Pongo abelii (Sumatran orangutan).